Here is a 108-residue protein sequence, read N- to C-terminus: Large ribosomal subunit protein uL22 (108 aa).

This sequence belongs to the universal ribosomal protein uL22 family. As to quaternary structure, part of the 50S ribosomal subunit.

Its function is as follows. This protein binds specifically to 23S rRNA; its binding is stimulated by other ribosomal proteins, e.g. L4, L17, and L20. It is important during the early stages of 50S assembly. It makes multiple contacts with different domains of the 23S rRNA in the assembled 50S subunit and ribosome. The globular domain of the protein is located near the polypeptide exit tunnel on the outside of the subunit, while an extended beta-hairpin is found that lines the wall of the exit tunnel in the center of the 70S ribosome. In Nitratiruptor sp. (strain SB155-2), this protein is Large ribosomal subunit protein uL22.